An 845-amino-acid polypeptide reads, in one-letter code: Protein translocase subunit SecA (845 aa).

Residues Gln-88, 106-110 (GEGKT), and Asp-495 contribute to the ATP site. The interval 804–838 (SNRANRPQKKAKRQPIVKPDKPGRNDPCPCGSGKK) is disordered. Basic residues predominate over residues 809–818 (RPQKKAKRQP). Positions 831, 833, 842, and 843 each coordinate Zn(2+).

It belongs to the SecA family. In terms of assembly, monomer and homodimer. Part of the essential Sec protein translocation apparatus which comprises SecA, SecYEG and auxiliary proteins SecDF. Other proteins may also be involved. Requires Zn(2+) as cofactor.

Its subcellular location is the cell inner membrane. It localises to the cytoplasm. It carries out the reaction ATP + H2O + cellular proteinSide 1 = ADP + phosphate + cellular proteinSide 2.. Its function is as follows. Part of the Sec protein translocase complex. Interacts with the SecYEG preprotein conducting channel. Has a central role in coupling the hydrolysis of ATP to the transfer of proteins into and across the cell membrane, serving as an ATP-driven molecular motor driving the stepwise translocation of polypeptide chains across the membrane. In Halothermothrix orenii (strain H 168 / OCM 544 / DSM 9562), this protein is Protein translocase subunit SecA.